The following is a 174-amino-acid chain: Recombination protein RecR (174 aa).

The segment at C30–C45 adopts a C4-type zinc-finger fold. The Toprim domain occupies G54 to P149.

This sequence belongs to the RecR family.

In terms of biological role, may play a role in DNA repair. It seems to be involved in an RecBC-independent recombinational process of DNA repair. It may act with RecF and RecO. The polypeptide is Recombination protein RecR (Haemophilus ducreyi (strain 35000HP / ATCC 700724)).